The primary structure comprises 281 residues: Phosphate import ATP-binding protein PstB 1 (281 aa).

The disordered stretch occupies residues 1–34; sequence MTENTAETADESSDGGVTATTGAATTTPTTPPEP. A compositionally biased stretch (low complexity) spans 15–28; that stretch reads GGVTATTGAATTTP. Residues 36-276 form the ABC transporter domain; sequence IRARDLDVFY…PEHQRVEEYI (241 aa). An ATP-binding site is contributed by 68–75; sequence GPSGCGKS.

This sequence belongs to the ABC transporter superfamily. Phosphate importer (TC 3.A.1.7) family. As to quaternary structure, the complex is composed of two ATP-binding proteins (PstB), two transmembrane proteins (PstC and PstA) and a solute-binding protein (PstS).

The protein resides in the cell membrane. It carries out the reaction phosphate(out) + ATP + H2O = ADP + 2 phosphate(in) + H(+). Its function is as follows. Part of the ABC transporter complex PstSACB involved in phosphate import. Responsible for energy coupling to the transport system. This Halobacterium salinarum (strain ATCC 700922 / JCM 11081 / NRC-1) (Halobacterium halobium) protein is Phosphate import ATP-binding protein PstB 1.